The sequence spans 331 residues: Protein RecA (331 aa).

Position 67 to 74 (G67 to T74) interacts with ATP.

Belongs to the RecA family.

It localises to the cytoplasm. Can catalyze the hydrolysis of ATP in the presence of single-stranded DNA, the ATP-dependent uptake of single-stranded DNA by duplex DNA, and the ATP-dependent hybridization of homologous single-stranded DNAs. It interacts with LexA causing its activation and leading to its autocatalytic cleavage. This chain is Protein RecA, found in Wigglesworthia glossinidia brevipalpis.